A 127-amino-acid polypeptide reads, in one-letter code: Small ribosomal subunit protein uS11 (127 aa).

Belongs to the universal ribosomal protein uS11 family. As to quaternary structure, part of the 30S ribosomal subunit. Interacts with proteins S7 and S18. Binds to IF-3.

Its function is as follows. Located on the platform of the 30S subunit, it bridges several disparate RNA helices of the 16S rRNA. Forms part of the Shine-Dalgarno cleft in the 70S ribosome. This is Small ribosomal subunit protein uS11 from Streptococcus agalactiae serotype Ia (strain ATCC 27591 / A909 / CDC SS700).